The primary structure comprises 480 residues: Proline--tRNA ligase (480 aa).

The protein belongs to the class-II aminoacyl-tRNA synthetase family. ProS type 3 subfamily. As to quaternary structure, homodimer.

The protein resides in the cytoplasm. The enzyme catalyses tRNA(Pro) + L-proline + ATP = L-prolyl-tRNA(Pro) + AMP + diphosphate. Functionally, catalyzes the attachment of proline to tRNA(Pro) in a two-step reaction: proline is first activated by ATP to form Pro-AMP and then transferred to the acceptor end of tRNA(Pro). The chain is Proline--tRNA ligase from Chloroflexus aggregans (strain MD-66 / DSM 9485).